Here is a 94-residue protein sequence, read N- to C-terminus: Co-chaperonin GroES (94 aa).

This sequence belongs to the GroES chaperonin family. As to quaternary structure, heptamer of 7 subunits arranged in a ring. Interacts with the chaperonin GroEL.

Its subcellular location is the cytoplasm. Together with the chaperonin GroEL, plays an essential role in assisting protein folding. The GroEL-GroES system forms a nano-cage that allows encapsulation of the non-native substrate proteins and provides a physical environment optimized to promote and accelerate protein folding. GroES binds to the apical surface of the GroEL ring, thereby capping the opening of the GroEL channel. This Leuconostoc citreum (strain KM20) protein is Co-chaperonin GroES.